The chain runs to 361 residues: Polyribonucleotide 5'-hydroxyl-kinase PH0197 (361 aa).

ATP is bound at residue 43 to 50 (GDVDTGKT).

The cofactor is a divalent metal cation.

The catalysed reaction is a 5'-end dephospho-2'-deoxyribonucleoside-DNA + ATP = a 5'-end 5'-phospho-2'-deoxyribonucleoside-DNA + ADP + H(+). It catalyses the reaction a 5'-end dephospho-ribonucleoside-RNA + ATP = a 5'-end 5'-phospho-ribonucleoside-RNA + ADP + H(+). Its activity is regulated as follows. DNA kinase activity is inhibited by 250 mM sodium chloride whereas RNA kinase activity is unaffected. Its function is as follows. Polynucleotide kinase that can phosphorylate the 5'-hydroxyl groups of both single-stranded RNA (ssRNA) and single-stranded DNA (ssDNA). Exhibits a strong preference for ssRNA. This is Polyribonucleotide 5'-hydroxyl-kinase PH0197 from Pyrococcus horikoshii (strain ATCC 700860 / DSM 12428 / JCM 9974 / NBRC 100139 / OT-3).